The sequence spans 116 residues: UPF0102 protein PERMA_0362 (116 aa).

Belongs to the UPF0102 family.

This chain is UPF0102 protein PERMA_0362, found in Persephonella marina (strain DSM 14350 / EX-H1).